The primary structure comprises 302 residues: Protoheme IX farnesyltransferase 1 (302 aa).

Transmembrane regions (helical) follow at residues 27 to 47 (VVALMLVTAIVGMSLAPVTDF), 49 to 69 (WIQASIGLIGIGLMAGSAAAF), 98 to 118 (SVAIFAVAIGVVGFVLLYAWV), 121 to 141 (LTAWMTFLSLLGYAVVYTMYL), 149 to 169 (IVIAGIAGAMPPLLGWTAVTG), 175 to 195 (AWLLVMIIFIWTPPHFWALAI), 228 to 248 (LLTLVCVMPVLVGMVGFIYLF), and 281 to 301 (IYHLLALFVALLADHYIGMVL).

It belongs to the UbiA prenyltransferase family. Protoheme IX farnesyltransferase subfamily.

Its subcellular location is the cell inner membrane. It carries out the reaction heme b + (2E,6E)-farnesyl diphosphate + H2O = Fe(II)-heme o + diphosphate. It participates in porphyrin-containing compound metabolism; heme O biosynthesis; heme O from protoheme: step 1/1. Functionally, converts heme B (protoheme IX) to heme O by substitution of the vinyl group on carbon 2 of heme B porphyrin ring with a hydroxyethyl farnesyl side group. The chain is Protoheme IX farnesyltransferase 1 from Vibrio parahaemolyticus serotype O3:K6 (strain RIMD 2210633).